The sequence spans 489 residues: Rhamnulokinase (489 aa).

13 to 17 (ASSGR) provides a ligand contact to ATP. The cysteines at positions 68 and 222 are disulfide-linked. Substrate is bound by residues Gly-83 and 236 to 238 (HDT). The active-site Proton acceptor is Asp-237. Position 259 (Thr-259) interacts with ATP. Asn-296 contacts substrate. Gln-304 lines the ATP pocket. Cys-353 and Cys-370 form a disulfide bridge. Gly-402 lines the ATP pocket. A disulfide bridge connects residues Cys-413 and Cys-417.

Belongs to the rhamnulokinase family. The cofactor is Mg(2+).

It catalyses the reaction L-rhamnulose + ATP = L-rhamnulose 1-phosphate + ADP + H(+). It participates in carbohydrate degradation; L-rhamnose degradation; glycerone phosphate from L-rhamnose: step 2/3. Functionally, involved in the catabolism of L-rhamnose (6-deoxy-L-mannose). Catalyzes the transfer of the gamma-phosphate group from ATP to the 1-hydroxyl group of L-rhamnulose to yield L-rhamnulose 1-phosphate. In Shigella sonnei (strain Ss046), this protein is Rhamnulokinase.